A 280-amino-acid chain; its full sequence is Diaminopimelate epimerase (280 aa).

Positions 14 and 67 each coordinate substrate. C76 functions as the Proton donor in the catalytic mechanism. Substrate contacts are provided by residues 77–78, N193, and 210–211; these read GN and ER. The Proton acceptor role is filled by C220. 221-222 serves as a coordination point for substrate; it reads GT.

This sequence belongs to the diaminopimelate epimerase family. As to quaternary structure, homodimer.

It is found in the cytoplasm. The enzyme catalyses (2S,6S)-2,6-diaminopimelate = meso-2,6-diaminopimelate. The protein operates within amino-acid biosynthesis; L-lysine biosynthesis via DAP pathway; DL-2,6-diaminopimelate from LL-2,6-diaminopimelate: step 1/1. In terms of biological role, catalyzes the stereoinversion of LL-2,6-diaminopimelate (L,L-DAP) to meso-diaminopimelate (meso-DAP), a precursor of L-lysine. This chain is Diaminopimelate epimerase, found in Methanocella arvoryzae (strain DSM 22066 / NBRC 105507 / MRE50).